A 303-amino-acid polypeptide reads, in one-letter code: Methionyl-tRNA formyltransferase (303 aa).

111-114 (SLLP) is a (6S)-5,6,7,8-tetrahydrofolate binding site.

The protein belongs to the Fmt family.

It carries out the reaction L-methionyl-tRNA(fMet) + (6R)-10-formyltetrahydrofolate = N-formyl-L-methionyl-tRNA(fMet) + (6S)-5,6,7,8-tetrahydrofolate + H(+). Its function is as follows. Attaches a formyl group to the free amino group of methionyl-tRNA(fMet). The formyl group appears to play a dual role in the initiator identity of N-formylmethionyl-tRNA by promoting its recognition by IF2 and preventing the misappropriation of this tRNA by the elongation apparatus. This Ehrlichia canis (strain Jake) protein is Methionyl-tRNA formyltransferase.